The following is a 107-amino-acid chain: U1-lycotoxin-Ls1b (107 aa).

The first 20 residues, 1 to 20 (MMKVLVVVALLVTLISYSSS), serve as a signal peptide directing secretion. Positions 21-41 (EGIDDLEADELLSLMADEQTR) are excised as a propeptide. 4 disulfide bridges follow: cysteine 44-cysteine 59, cysteine 51-cysteine 68, cysteine 58-cysteine 86, and cysteine 70-cysteine 84.

This sequence belongs to the neurotoxin 19 (CSTX) family. 04 (U1-Lctx) subfamily. In terms of tissue distribution, expressed by the venom gland.

The protein resides in the secreted. This Lycosa singoriensis (Wolf spider) protein is U1-lycotoxin-Ls1b.